A 592-amino-acid polypeptide reads, in one-letter code: Colicin-A (592 aa).

Gly residues-rich tracts occupy residues Met1 to Thr13 and Pro23 to Gly34. Disordered regions lie at residues Met1 to Ser57 and Arg373 to Asp395. Helical transmembrane passes span Trp528–Ala548 and Val555–Ile575.

The protein belongs to the channel forming colicin family.

The protein resides in the cell membrane. Its function is as follows. This colicin is a channel-forming colicin. This class of transmembrane toxins depolarize the cytoplasmic membrane, leading to dissipation of cellular energy. Functionally, colicins are polypeptide toxins produced by and active against E.coli and closely related bacteria. This Citrobacter freundii protein is Colicin-A (caa).